The sequence spans 694 residues: Katanin p80 WD40 repeat-containing subunit B1 (694 aa).

6 WD repeats span residues 18–58 (AHSS…CIMS), 61–100 (GHTS…ILRT), 103–142 (GHKA…CVFR), 145–186 (GHTQ…TEFT), 188–226 (HTSA…MIGS), and 229–269 (GETG…DVVH). 2 disordered regions span residues 319–410 (KPIP…PFPA) and 470–492 (TTSA…STGI). The span at 327–349 (ALGTTLRRNYERPTTSCTGQEMK) shows a compositional bias: polar residues. Basic and acidic residues predominate over residues 350-378 (QSSEADRRSPEGERRSPSSEDEKEDKESS). Residues 470 to 481 (TTSASSPSRPVV) are compositionally biased toward low complexity. A compositionally biased stretch (polar residues) spans 482 to 492 (NTTKPKPSTGI).

It belongs to the WD repeat KATNB1 family. In terms of assembly, interacts with katna1. This interaction enhances the microtubule binding and severing activity of katna1 and also targets this activity to the centrosome.

It localises to the cytoplasm. The protein resides in the cytoskeleton. The protein localises to the microtubule organizing center. Its subcellular location is the centrosome. It is found in the spindle pole. It localises to the spindle. Participates in a complex which severs microtubules in an ATP-dependent manner. May act to target the enzymatic subunit of this complex to sites of action such as the centrosome. Microtubule severing may promote rapid reorganization of cellular microtubule arrays and the release of microtubules from the centrosome following nucleation. The polypeptide is Katanin p80 WD40 repeat-containing subunit B1 (katnb1) (Danio rerio (Zebrafish)).